We begin with the raw amino-acid sequence, 629 residues long: Pentatricopeptide repeat-containing protein At1g62930, chloroplastic (629 aa).

The transit peptide at 1–41 directs the protein to the chloroplast; the sequence is MTSCVHLGIVASQSKKMSLAKRFAQLRKASPLFSLRGVYFS. PPR repeat units lie at residues 79-113, 114-148, 149-183, 184-218, 219-253, 254-288, 289-323, 324-358, 359-393, 394-428, 429-463, 464-498, 499-533, 534-568, and 569-603; these read SIVE…RISY, DLYS…GYEP, DIVT…EYQP, NTVT…GCQP, DLFT…KIEA, DVVI…GIRP, NVVT…KINP, NVVT…SIDP, DIFT…DCFP, NVVT…GLVG, NTVT…GVPP, DIIT…KMEP, DIYT…GVKP, NVII…GTLP, and NSGT…GFVG.

It belongs to the PPR family. P subfamily.

It is found in the plastid. The protein localises to the chloroplast. The sequence is that of Pentatricopeptide repeat-containing protein At1g62930, chloroplastic from Arabidopsis thaliana (Mouse-ear cress).